The following is a 245-amino-acid chain: Dof zinc finger protein DOF3.2 (245 aa).

The span at 15 to 26 (SCSTQDYQNQKK) shows a compositional bias: polar residues. The segment at 15–41 (SCSTQDYQNQKKPLSATRPAPPEQSLR) is disordered. The Dof-type zinc finger occupies 40–94 (LRCPRCDSTNTKFCYYNNYSLSQPRYFCKSCRRYWTKGGILRNIPIGGAYRKHKR). Residues Cys42, Cys45, Cys67, and Cys70 each coordinate Zn(2+). The segment at 91–118 (KHKRSSSATKSLRTTPEPTMTHDGKSFP) is disordered. Residues 96-108 (SSATKSLRTTPEP) show a composition bias toward polar residues.

Interacts with TCP14. As to expression, the PEAR proteins (e.g. DOF2.4, DOF5.1, DOF3.2, DOF1.1, DOF5.6 and DOF5.3) form a short-range concentration gradient that peaks at protophloem sieve elements (PSE).

It is found in the nucleus. Transcription factor that negatively affects seed germination and opposes TCP14 function in the regulation of a specific set of abscisic acid-related genes. The PEAR proteins (e.g. DOF2.4, DOF5.1, DOF3.2, DOF1.1, DOF5.6 and DOF5.3) activate gene expression that promotes radial growth of protophloem sieve elements. This Arabidopsis thaliana (Mouse-ear cress) protein is Dof zinc finger protein DOF3.2.